The primary structure comprises 459 residues: DNA damage-inducible protein F (459 aa).

A run of 12 helical transmembrane segments spans residues Pro2 to Leu22, Leu29 to Val49, Leu63 to Leu83, Leu111 to Leu131, Trp154 to Gln174, Val180 to Gly200, Gly207 to Val227, Leu265 to Ile285, Ala289 to Val309, Ile338 to Leu358, Ile373 to Ile393, and Leu416 to Ala436.

Belongs to the multi antimicrobial extrusion (MATE) (TC 2.A.66.1) family.

The protein resides in the cell inner membrane. This Escherichia coli (strain K12) protein is DNA damage-inducible protein F (dinF).